The chain runs to 73 residues: uncharacterized protein (73 aa).

The protein belongs to the asfivirus DP63R family.

This is an uncharacterized protein from African swine fever virus (isolate Tick/Malawi/Lil 20-1/1983) (ASFV).